The following is a 997-amino-acid chain: P3N-PIPO polyprotein (997 aa).

Residues 173 to 313 (IVCVDDVNNL…VLFYSDVEHY (141 aa)) enclose the Peptidase S30 domain. Catalysis depends on for P1 proteinase activity residues Glu-235 and Ser-267. An Involved in interaction with stylet and aphid transmission motif is present at residues 365–368 (KLSC). The Involved in virions binding and aphid transmission motif lies at 621–623 (PTK). The Peptidase C6 domain occupies 647–769 (MYIAKEGYCY…QSEMKHYRVG (123 aa)). Active-site for helper component proteinase activity residues include Cys-655 and His-728.

It belongs to the potyviridae P3N-PIPO polyprotein family. As to quaternary structure, interacts (via PIPO domain) with host PCaP1 protein; this interaction may help to anchor the movement complex to the plasma membrane from which the complex could move to the plasmodesmata. Post-translationally, potyviral RNA is expressed as two polyproteins which undergo post-translational proteolytic processing. Genome polyprotein is processed by NIa-pro, P1 and HC-pro proteinases resulting in the production of at least ten individual proteins. P3N-PIPO is cleaved by P1 and HC-pro proteinases resulting in the production of three individual proteins. The P1 proteinase and the HC-pro cleave only their respective C-termini autocatalytically.

It localises to the host cell junction. The protein resides in the host plasmodesma. The catalysed reaction is Hydrolyzes a Gly-|-Gly bond at its own C-terminus, commonly in the sequence -Tyr-Xaa-Val-Gly-|-Gly, in the processing of the potyviral polyprotein.. In terms of biological role, required for aphid transmission and also has proteolytic activity. Only cleaves a Gly-Gly dipeptide at its own C-terminus. Interacts with virions and aphid stylets. Acts as a suppressor of RNA-mediated gene silencing, also known as post-transcriptional gene silencing (PTGS), a mechanism of plant viral defense that limits the accumulation of viral RNAs. May have RNA-binding activity. Its function is as follows. Allows efficient cell to cell propagation, by bypassing the host cell wall barrier. Transports viral genome to neighboring plant cells directly through plasmosdesmata, without any budding. This Citrullus lanatus (Watermelon) protein is P3N-PIPO polyprotein.